We begin with the raw amino-acid sequence, 848 residues long: Neprilysin-11 (848 aa).

The Cytoplasmic portion of the chain corresponds to 1–74; sequence MPFGNDPPDY…WWKSRTTMEK (74 aa). Residues 75–95 traverse the membrane as a helical; Signal-anchor for type II membrane protein segment; it reads LLLPVLLLFCLLTAVLLAVII. Residues 96 to 848 lie on the Extracellular side of the membrane; it reads NTDKRIEAMK…VNPDHKCIVW (753 aa). The disordered stretch occupies residues 108–161; that stretch reads HATQTEHAGFGDPTENPTKTAEDPRVPPIVPEAPTSPEPEVTTSTEKPKEPEVC. Over residues 133-144 the composition is skewed to pro residues; sequence VPPIVPEAPTSP. Positions 160-848 constitute a Peptidase M13 domain; the sequence is VCSTPGCVRA…VNPDHKCIVW (689 aa). Cysteine 161 and cysteine 166 form a disulfide bridge. N-linked (GlcNAc...) asparagine glycosylation is found at asparagine 178, asparagine 249, asparagine 284, asparagine 312, asparagine 337, asparagine 364, asparagine 398, and asparagine 438. 4 disulfides stabilise this stretch: cysteine 184-cysteine 833, cysteine 192-cysteine 793, cysteine 247-cysteine 509, and cysteine 719-cysteine 845. Residue histidine 682 participates in Zn(2+) binding. The active site involves glutamate 683. Histidine 686 contacts Zn(2+). N-linked (GlcNAc...) asparagine glycosylation occurs at asparagine 726. Glutamate 744 serves as a coordination point for Zn(2+). Aspartate 748 serves as the catalytic Proton donor.

It belongs to the peptidase M13 family. Zn(2+) is required as a cofactor.

The protein resides in the cell membrane. Probable cell surface protease. The protein is Neprilysin-11 (nep-11) of Caenorhabditis elegans.